The chain runs to 545 residues: CTP synthase (545 aa).

The segment at 1–266 (MTTNYIFVTG…DDYICKRFSL (266 aa)) is amidoligase domain. CTP is bound at residue serine 14. UTP is bound at residue serine 14. ATP-binding positions include 15-20 (SLGKGI) and aspartate 72. Residues aspartate 72 and glutamate 140 each coordinate Mg(2+). Residues 147–149 (DIE), 187–192 (KTKPTQ), and lysine 223 contribute to the CTP site. UTP contacts are provided by residues 187–192 (KTKPTQ) and lysine 223. 239–241 (KDV) contributes to the ATP binding site. The 252-residue stretch at 291–542 (TIGMVGKYIE…VKAASEHQKR (252 aa)) folds into the Glutamine amidotransferase type-1 domain. Glycine 352 contacts L-glutamine. The Nucleophile; for glutamine hydrolysis role is filled by cysteine 379. L-glutamine contacts are provided by residues 380–383 (LGMQ), glutamate 403, and arginine 470. Catalysis depends on residues histidine 515 and glutamate 517.

This sequence belongs to the CTP synthase family. Homotetramer.

It catalyses the reaction UTP + L-glutamine + ATP + H2O = CTP + L-glutamate + ADP + phosphate + 2 H(+). The catalysed reaction is L-glutamine + H2O = L-glutamate + NH4(+). The enzyme catalyses UTP + NH4(+) + ATP = CTP + ADP + phosphate + 2 H(+). It functions in the pathway pyrimidine metabolism; CTP biosynthesis via de novo pathway; CTP from UDP: step 2/2. Allosterically activated by GTP, when glutamine is the substrate; GTP has no effect on the reaction when ammonia is the substrate. The allosteric effector GTP functions by stabilizing the protein conformation that binds the tetrahedral intermediate(s) formed during glutamine hydrolysis. Inhibited by the product CTP, via allosteric rather than competitive inhibition. Its function is as follows. Catalyzes the ATP-dependent amination of UTP to CTP with either L-glutamine or ammonia as the source of nitrogen. Regulates intracellular CTP levels through interactions with the four ribonucleotide triphosphates. This chain is CTP synthase, found in Salmonella arizonae (strain ATCC BAA-731 / CDC346-86 / RSK2980).